Consider the following 192-residue polypeptide: 7-methyl-GTP pyrophosphatase (192 aa).

The active-site Proton acceptor is the Asp-69.

This sequence belongs to the Maf family. YceF subfamily. A divalent metal cation is required as a cofactor.

Its subcellular location is the cytoplasm. The catalysed reaction is N(7)-methyl-GTP + H2O = N(7)-methyl-GMP + diphosphate + H(+). Nucleoside triphosphate pyrophosphatase that hydrolyzes 7-methyl-GTP (m(7)GTP). May have a dual role in cell division arrest and in preventing the incorporation of modified nucleotides into cellular nucleic acids. The chain is 7-methyl-GTP pyrophosphatase (maf-2) from Pseudomonas putida (strain ATCC 47054 / DSM 6125 / CFBP 8728 / NCIMB 11950 / KT2440).